The chain runs to 637 residues: Poly [ADP-ribose] polymerase 2 (637 aa).

Residues 1 to 140 (MANKLKVDEL…KKEEKIVTAT (140 aa)) mediate DNA binding. The region spanning 2-36 (ANKLKVDELRLKLAERGLSTTGVKAVLVERLEEAI) is the SAP 1 domain. Positions 35–46 (AIAEDTKKEESK) are enriched in basic and acidic residues. Positions 35–56 (AIAEDTKKEESKSKRKRNSSND) are disordered. The Nuclear localization signal signature appears at 41 to 62 (KKEESKSKRKRNSSNDTYESNK). The SAP 2 domain maps to 69-103 (FRGMIVKELREEAIKRGLDTTGTKKDLLERLCNDA). Residues 106 to 117 (VSNAPVKSSNGT) are compositionally biased toward polar residues. A disordered region spans residues 106-134 (VSNAPVKSSNGTDEAEDDNNGFEEEKKEE). Over residues 118-127 (DEAEDDNNGF) the composition is skewed to acidic residues. The WGR domain occupies 158-255 (QYHVLQRGDD…KEFIPHPKSY (98 aa)). One can recognise a PARP alpha-helical domain in the interval 286–404 (QSKLDTRVAK…EIELATKLLS (119 aa)). The PARP catalytic domain maps to 412 to 637 (DPLYYHYQQL…VIQVKFNYKH (226 aa)).

Belongs to the ARTD/PARP family.

It localises to the nucleus. It catalyses the reaction NAD(+) + (ADP-D-ribosyl)n-acceptor = nicotinamide + (ADP-D-ribosyl)n+1-acceptor + H(+).. The catalysed reaction is L-aspartyl-[protein] + NAD(+) = 4-O-(ADP-D-ribosyl)-L-aspartyl-[protein] + nicotinamide. It carries out the reaction L-glutamyl-[protein] + NAD(+) = 5-O-(ADP-D-ribosyl)-L-glutamyl-[protein] + nicotinamide. Its function is as follows. Involved in the base excision repair (BER) pathway, by catalyzing the poly(ADP-ribosyl)ation of a limited number of acceptor proteins involved in chromatin architecture and in DNA metabolism. This modification follows DNA damages and appears as an obligatory step in a detection/signaling pathway leading to the reparation of DNA strand breaks. The sequence is that of Poly [ADP-ribose] polymerase 2 (PARP2) from Arabidopsis thaliana (Mouse-ear cress).